A 256-amino-acid polypeptide reads, in one-letter code: H-2 class II histocompatibility antigen, A-K alpha chain (256 aa).

Positions 1 to 23 are cleaved as a signal peptide; that stretch reads MPRSRALILGVLALTTMLSLCGG. The segment at 24 to 111 is alpha-1; that stretch reads EDDIEADHVG…KRSNSTPATN (88 aa). Residues 24–218 lie on the Extracellular side of the membrane; that stretch reads EDDIEADHVG…IPAPMSELTE (195 aa). Residues asparagine 105 and asparagine 145 are each glycosylated (N-linked (GlcNAc...) asparagine). The segment at 112-205 is alpha-2; sequence EAPQATVFPK…GLEEPVLKHW (94 aa). The region spanning 114-206 is the Ig-like C1-type domain; that stretch reads PQATVFPKSP…LEEPVLKHWE (93 aa). Residues cysteine 134 and cysteine 190 are joined by a disulfide bond. Positions 206-218 are connecting peptide; it reads EPEIPAPMSELTE. The helical transmembrane segment at 219–241 threads the bilayer; it reads TVVCALGLSVGLVGIVVGTIFII. At 242 to 256 the chain is on the cytoplasmic side; it reads QGLRSGGTSRHPGPL.

This sequence belongs to the MHC class II family.

Its subcellular location is the membrane. The protein is H-2 class II histocompatibility antigen, A-K alpha chain (H2-Aa) of Mus musculus (Mouse).